The primary structure comprises 363 residues: MHASIFAKLEQLSMRLEEVDVMLSNPKVASDVKKFTKLSIERAQLTPVNQQFQAYLSHHRNLEDAKLMLLEDDMDIKAMAKEEMLDVKKKLDHLYLELKKSLLPKDPNDSRNIIIEIRAGTGGNEASIFSSNLFKMYSRYTEKKKWQIEVISSSLGEHGGFKEIIARISGVGVYSKLKFESGAHRVQRVPETESQGRVHTSACTIAIMPEVENIEEVNINMSDVRVDTFRASGAGGQHVNKTNSAVRITHIPTGTVAECQDGRSQHKNKAQALLVLASRIFDLQQQEQHKEQASTRKELIGSGDRSQRIRTYNYPQGRITDHRINLTLYKLSEIMEGNLNAIIEPLIVEQQTSQLTELNDVLS.

Q237 carries the post-translational modification N5-methylglutamine. Residues 287–299 (EQHKEQASTRKEL) show a composition bias toward basic and acidic residues. The interval 287 to 306 (EQHKEQASTRKELIGSGDRS) is disordered.

This sequence belongs to the prokaryotic/mitochondrial release factor family. In terms of processing, methylated by PrmC. Methylation increases the termination efficiency of RF1.

The protein localises to the cytoplasm. In terms of biological role, peptide chain release factor 1 directs the termination of translation in response to the peptide chain termination codons UAG and UAA. This chain is Peptide chain release factor 1, found in Ruthia magnifica subsp. Calyptogena magnifica.